We begin with the raw amino-acid sequence, 94 residues long: UPF0235 protein TK0768 (94 aa).

It belongs to the UPF0235 family.

This is UPF0235 protein TK0768 from Thermococcus kodakarensis (strain ATCC BAA-918 / JCM 12380 / KOD1) (Pyrococcus kodakaraensis (strain KOD1)).